Reading from the N-terminus, the 498-residue chain is Membrane-bound lytic murein transglycosylase F (498 aa).

An N-terminal signal peptide occupies residues 1–29 (MFFKPDFRPRCAKWLIATGLFLMLGACVE). Residues 30–267 (KPTTLERVKE…RLKDRYYGHV (238 aa)) form a non-LT domain region. The segment at 268–498 (DVLGYVGAYT…SSSSTDESPL (231 aa)) is LT domain. Glutamate 314 is a catalytic residue. The segment at 464–498 (VADGNLHVPGVDKTQPPVPPASPVPSSSSTDESPL) is disordered.

This sequence in the N-terminal section; belongs to the bacterial solute-binding protein 3 family. It in the C-terminal section; belongs to the transglycosylase Slt family.

Its subcellular location is the cell outer membrane. The enzyme catalyses Exolytic cleavage of the (1-&gt;4)-beta-glycosidic linkage between N-acetylmuramic acid (MurNAc) and N-acetylglucosamine (GlcNAc) residues in peptidoglycan, from either the reducing or the non-reducing ends of the peptidoglycan chains, with concomitant formation of a 1,6-anhydrobond in the MurNAc residue.. In terms of biological role, murein-degrading enzyme that degrades murein glycan strands and insoluble, high-molecular weight murein sacculi, with the concomitant formation of a 1,6-anhydromuramoyl product. Lytic transglycosylases (LTs) play an integral role in the metabolism of the peptidoglycan (PG) sacculus. Their lytic action creates space within the PG sacculus to allow for its expansion as well as for the insertion of various structures such as secretion systems and flagella. The protein is Membrane-bound lytic murein transglycosylase F of Pseudomonas syringae pv. syringae (strain B728a).